Here is a 2039-residue protein sequence, read N- to C-terminus: PHD finger protein 3 (2039 aa).

A phosphoserine mark is found at Ser-97 and Ser-125. Positions 144–168 (STIAKRSNAAPLSNTKKASGKTVST) are enriched in polar residues. A disordered region spans residues 144 to 178 (STIAKRSNAAPLSNTKKASGKTVSTAKAGVKQPER). Residues Ser-283 and Ser-299 each carry the phosphoserine modification. A compositionally biased stretch (basic and acidic residues) spans 460-472 (ESHETANLQDDRN). Disordered regions lie at residues 460-492 (ESHE…KHTK), 528-555 (VKRN…IDKE), and 596-685 (LSDK…SLDE). Positions 473 to 483 (SQSSSVSYLES) are enriched in low complexity. A compositionally biased stretch (basic and acidic residues) spans 596–612 (LSDKSHAHPGCLKEPHH). Polar residues predominate over residues 617–640 (GHVSHSSQKQCHKPQQQAPAMKTN). The span at 642–670 (HVKEELEHPGVEHFKEEDKLKLKKPEKNL) shows a compositional bias: basic and acidic residues. A Glycyl lysine isopeptide (Lys-Gly) (interchain with G-Cter in SUMO2) cross-link involves residue Lys-644. At Ser-680 the chain carries Phosphoserine. A PHD-type zinc finger spans residues 717-772 (SKQCGFCKKPHGNRFMVGCGRCDDWFHGDCVGLSLSQAQQMGEEDKEYVCVKCCAE). The tract at residues 860–904 (GQPVLPRRSSEEKSEKIPKESTTVTCTGEKASKPGTHEKQEMKKK) is disordered. Composition is skewed to basic and acidic residues over residues 867-878 (RSSEEKSEKIPK) and 889-900 (KASKPGTHEKQE). Positions 927-1046 (IRQSVRHSLK…MIEKEQREVE (120 aa)) constitute a TFIIS central domain. Lys-964 is covalently cross-linked (Glycyl lysine isopeptide (Lys-Gly) (interchain with G-Cter in SUMO2)). Phosphoserine is present on Ser-1014. The segment at 1078–1109 (EPAANKSLEKPEGSEKQKEEVDSMSKDTTSQH) is disordered. A compositionally biased stretch (basic and acidic residues) spans 1084 to 1102 (SLEKPEGSEKQKEEVDSMS). Phosphoserine occurs at positions 1133, 1148, and 1178. Disordered regions lie at residues 1171 to 1191 (FEEE…RPEM), 1360 to 1380 (STSH…PPDK), and 1581 to 1623 (KQEE…VGKG). Over residues 1581–1598 (KQEETVESKEKTLKRQLQ) the composition is skewed to basic and acidic residues. A phosphoserine mark is found at Ser-1614 and Ser-1642. 2 disordered regions span residues 1643–1684 (PQFI…LPGL) and 1776–1800 (PSKS…PMRP). Basic and acidic residues predominate over residues 1666–1684 (ESKDGDSCRNGEKHMLPGL). Low complexity predominate over residues 1781 to 1797 (TFTSRSTSPRTSTNFSP). Arg-1867 and Arg-1877 each carry asymmetric dimethylarginine. Residues 1884 to 2039 (FYQVKDIRRP…DHTDRTKSKR (156 aa)) form a disordered region. 2 stretches are compositionally biased toward basic and acidic residues: residues 1888-1902 (KDIR…DPWG) and 1912-2039 (PFNR…KSKR). 2 positions are modified to phosphoserine: Ser-1898 and Ser-1925. Lys-1931 is covalently cross-linked (Glycyl lysine isopeptide (Lys-Gly) (interchain with G-Cter in SUMO2)).

As to expression, ubiquitous. Expression is significantly reduced or lost in glioblastomas, glioblastoma cell lines, anaplastic astrocytomas, and astrocytomas.

In Homo sapiens (Human), this protein is PHD finger protein 3 (PHF3).